The chain runs to 81 residues: uncharacterized protein (81 aa).

A mitochondrion-targeting transit peptide spans methionine 1 to alanine 20. Residues tyrosine 27 to glutamine 53 are disordered. Residues glycine 28 to glutamine 53 show a composition bias toward low complexity. A helical membrane pass occupies residues isoleucine 59–methionine 79.

The protein resides in the mitochondrion membrane. This is an uncharacterized protein from Schizosaccharomyces pombe (strain 972 / ATCC 24843) (Fission yeast).